A 904-amino-acid chain; its full sequence is Protein translocase subunit SecA (904 aa).

ATP-binding positions include Q87, 105–109 (GEGKT), and D512. Positions 851-904 (LAKQQQLSHESDNSALMSQEEANVAASLERKVGRNDPCPCGSGKKYKQCHGRLQ) are disordered. The span at 853–871 (KQQQLSHESDNSALMSQEE) shows a compositional bias: polar residues. Zn(2+) is bound by residues C888, C890, C899, and H900. The segment covering 894–904 (KKYKQCHGRLQ) has biased composition (basic residues).

Belongs to the SecA family. In terms of assembly, monomer and homodimer. Part of the essential Sec protein translocation apparatus which comprises SecA, SecYEG and auxiliary proteins SecDF-YajC and YidC. The cofactor is Zn(2+).

The protein localises to the cell inner membrane. Its subcellular location is the cytoplasm. The enzyme catalyses ATP + H2O + cellular proteinSide 1 = ADP + phosphate + cellular proteinSide 2.. Functionally, part of the Sec protein translocase complex. Interacts with the SecYEG preprotein conducting channel. Has a central role in coupling the hydrolysis of ATP to the transfer of proteins into and across the cell membrane, serving both as a receptor for the preprotein-SecB complex and as an ATP-driven molecular motor driving the stepwise translocation of polypeptide chains across the membrane. In Yersinia enterocolitica serotype O:8 / biotype 1B (strain NCTC 13174 / 8081), this protein is Protein translocase subunit SecA.